We begin with the raw amino-acid sequence, 129 residues long: Small ribosomal subunit protein uS11 (129 aa).

Belongs to the universal ribosomal protein uS11 family. In terms of assembly, part of the 30S ribosomal subunit. Interacts with proteins S7 and S18. Binds to IF-3.

Its function is as follows. Located on the platform of the 30S subunit, it bridges several disparate RNA helices of the 16S rRNA. Forms part of the Shine-Dalgarno cleft in the 70S ribosome. The polypeptide is Small ribosomal subunit protein uS11 (Levilactobacillus brevis (strain ATCC 367 / BCRC 12310 / CIP 105137 / JCM 1170 / LMG 11437 / NCIMB 947 / NCTC 947) (Lactobacillus brevis)).